The primary structure comprises 435 residues: Cytochrome c biogenesis protein CcsB (435 aa).

Helical transmembrane passes span 11–31, 69–89, and 159–179; these read LRVA…GTAL, SDWF…CSWR, and VGPL…VWGV.

This sequence belongs to the Ccs1/CcsB family. As to quaternary structure, may interact with CcsA.

The protein resides in the plastid. Its subcellular location is the organellar chromatophore thylakoid membrane. In terms of biological role, required during biogenesis of c-type cytochromes (cytochrome c6 and cytochrome f) at the step of heme attachment. This Paulinella chromatophora protein is Cytochrome c biogenesis protein CcsB.